Reading from the N-terminus, the 1087-residue chain is Exportin-7 (1087 aa).

N-acetylalanine is present on alanine 2. An Importin N-terminal domain is found at 30 to 96 (AEKALVEFTN…RNYVLNYLAT (67 aa)). Serine 570 carries the post-translational modification Phosphoserine.

Belongs to the exportin family. As to quaternary structure, binds to nucleoporins. Found in a complex with XPO7, EIF4A1, ARHGAP1, VPS26A, VPS29, VPS35 and SFN. Interacts with ARHGAP1 and SFN. Interacts with Ran and cargo proteins in a GTP-dependent manner.

It localises to the cytoplasm. The protein resides in the nucleus. The protein localises to the nuclear pore complex. In terms of biological role, mediates the nuclear export of proteins (cargos) with broad substrate specificity. In the nucleus binds cooperatively to its cargo and to the GTPase Ran in its active GTP-bound form. Docking of this trimeric complex to the nuclear pore complex (NPC) is mediated through binding to nucleoporins. Upon transit of a nuclear export complex into the cytoplasm, disassembling of the complex and hydrolysis of Ran-GTP to Ran-GDP (induced by RANBP1 and RANGAP1, respectively) cause release of the cargo from the export receptor. XPO7 then return to the nuclear compartment and mediate another round of transport. The directionality of nuclear export is thought to be conferred by an asymmetric distribution of the GTP- and GDP-bound forms of Ran between the cytoplasm and nucleus. This Pongo abelii (Sumatran orangutan) protein is Exportin-7 (XPO7).